We begin with the raw amino-acid sequence, 1389 residues long: DNA-directed RNA polymerase subunit beta'' (1389 aa).

Residues cysteine 220, cysteine 290, cysteine 297, and cysteine 300 each contribute to the Zn(2+) site.

It belongs to the RNA polymerase beta' chain family. RpoC2 subfamily. As to quaternary structure, in plastids the minimal PEP RNA polymerase catalytic core is composed of four subunits: alpha, beta, beta', and beta''. When a (nuclear-encoded) sigma factor is associated with the core the holoenzyme is formed, which can initiate transcription. Zn(2+) is required as a cofactor.

It is found in the plastid. Its subcellular location is the chloroplast. The catalysed reaction is RNA(n) + a ribonucleoside 5'-triphosphate = RNA(n+1) + diphosphate. DNA-dependent RNA polymerase catalyzes the transcription of DNA into RNA using the four ribonucleoside triphosphates as substrates. This Chloranthus spicatus (Chulantree) protein is DNA-directed RNA polymerase subunit beta''.